We begin with the raw amino-acid sequence, 152 residues long: Ribonuclease pancreatic gamma-type (152 aa).

Residues 1–25 (MGLEKSLFLFSLLVLVLGWVQPSLG) form the signal peptide. 2 residues coordinate substrate: Lys-35 and Arg-38. His-40 serves as the catalytic Proton acceptor. 4 disulfide bridges follow: Cys-54-Cys-112, Cys-68-Cys-123, Cys-86-Cys-138, and Cys-93-Cys-100. Residues 69–73 (KSMNT), Lys-94, and Arg-113 contribute to the substrate site. His-147 functions as the Proton donor in the catalytic mechanism.

It belongs to the pancreatic ribonuclease family. As to quaternary structure, monomer.

It localises to the secreted. It catalyses the reaction an [RNA] containing cytidine + H2O = an [RNA]-3'-cytidine-3'-phosphate + a 5'-hydroxy-ribonucleotide-3'-[RNA].. It carries out the reaction an [RNA] containing uridine + H2O = an [RNA]-3'-uridine-3'-phosphate + a 5'-hydroxy-ribonucleotide-3'-[RNA].. Its function is as follows. Endonuclease that catalyzes the cleavage of RNA on the 3' side of pyrimidine nucleotides. Acts on single-stranded and double-stranded RNA. The chain is Ribonuclease pancreatic gamma-type from Rattus norvegicus (Rat).